A 261-amino-acid polypeptide reads, in one-letter code: Ribosomal RNA small subunit methyltransferase A (261 aa).

S-adenosyl-L-methionine contacts are provided by His-13, Leu-15, Gly-40, Glu-61, Asp-85, and Asn-105.

It belongs to the class I-like SAM-binding methyltransferase superfamily. rRNA adenine N(6)-methyltransferase family. RsmA subfamily.

The protein localises to the cytoplasm. The enzyme catalyses adenosine(1518)/adenosine(1519) in 16S rRNA + 4 S-adenosyl-L-methionine = N(6)-dimethyladenosine(1518)/N(6)-dimethyladenosine(1519) in 16S rRNA + 4 S-adenosyl-L-homocysteine + 4 H(+). Functionally, specifically dimethylates two adjacent adenosines (A1518 and A1519) in the loop of a conserved hairpin near the 3'-end of 16S rRNA in the 30S particle. May play a critical role in biogenesis of 30S subunits. This chain is Ribosomal RNA small subunit methyltransferase A, found in Flavobacterium johnsoniae (strain ATCC 17061 / DSM 2064 / JCM 8514 / BCRC 14874 / CCUG 350202 / NBRC 14942 / NCIMB 11054 / UW101) (Cytophaga johnsonae).